Here is a 518-residue protein sequence, read N- to C-terminus: Zinc finger protein 449 (518 aa).

Residues Arg30–Leu112 enclose the SCAN box domain. Polar residues predominate over residues Asn292–Leu304. Positions Asn292 to Cys325 are disordered. C2H2-type zinc fingers lie at residues His323 to His345, His351 to His373, Tyr379 to His401, Tyr407 to His429, His435 to His457, Phe463 to His485, and Tyr491 to His513.

This sequence belongs to the krueppel C2H2-type zinc-finger protein family.

It is found in the nucleus. In terms of biological role, may be involved in transcriptional regulation. The polypeptide is Zinc finger protein 449 (ZNF449) (Homo sapiens (Human)).